A 737-amino-acid chain; its full sequence is Relaxin receptor 2 (737 aa).

Over Met-1–Asn-399 the chain is Extracellular. Residues Leu-27–Gly-64 form the LDL-receptor class A domain. 3 disulfide bridges follow: Cys-28–Cys-41, Cys-35–Cys-54, and Cys-48–Cys-63. N-linked (GlcNAc...) asparagine glycosylation occurs at Asn-37. An N-linked (GlcNAc...) asparagine glycan is attached at Asn-121. LRR repeat units follow at residues Asn-121 to Lys-142, Gln-145 to Gly-166, Asn-169 to Asp-190, Gln-193 to Gly-214, Ser-217 to Gln-238, Gln-241 to Ser-262, Ser-265 to Ser-286, Asn-289 to Asp-310, Leu-313 to Ser-334, and Gln-337 to Pro-358. Asn-257 carries N-linked (GlcNAc...) asparagine glycosylation. N-linked (GlcNAc...) asparagine glycosylation occurs at Asn-318. N-linked (GlcNAc...) asparagine glycosylation is present at Asn-361. Residues Ile-400 to Ile-420 traverse the membrane as a helical segment. At Gly-421–Lys-438 the chain is on the cytoplasmic side. Residues Ile-439 to Ile-459 traverse the membrane as a helical segment. The Extracellular portion of the chain corresponds to Lys-460–Cys-478. Cys-478 and Cys-556 form a disulfide bridge. Residues Arg-479–Leu-501 form a helical membrane-spanning segment. Over Glu-502–Gln-520 the chain is Cytoplasmic. Residues Thr-521–Trp-541 traverse the membrane as a helical segment. Residues Lys-542 to Gly-575 lie on the Extracellular side of the membrane. The helical transmembrane segment at Ile-576–Phe-596 threads the bilayer. The Cytoplasmic segment spans residues Cys-597 to Arg-622. Residues Phe-623–Leu-643 form a helical membrane-spanning segment. The Extracellular portion of the chain corresponds to Ser-644–Thr-653. Residues Ile-654–Tyr-674 form a helical membrane-spanning segment. Over Thr-675–Ser-737 the chain is Cytoplasmic.

Belongs to the G-protein coupled receptor 1 family.

It is found in the cell membrane. Receptor for relaxin. The activity of this receptor is mediated by G proteins leading to stimulation of adenylate cyclase and an increase of cAMP. May also be a receptor for Leydig insulin-like peptide (INSL3). The protein is Relaxin receptor 2 (RXFP2) of Canis lupus familiaris (Dog).